The chain runs to 549 residues: Cation/acetate symporter ActP (549 aa).

The next 13 helical transmembrane spans lie at 33 to 53 (WQAI…TYWA), 77 to 97 (LAIA…ALVF), 103 to 123 (GLIY…LIAE), 148 to 168 (ILSA…QMVG), 183 to 203 (IAVV…GMLA), 206 to 226 (WVQI…AFMV), 262 to 282 (ISAL…PHIL), 303 to 323 (GFMG…IMLV), 355 to 375 (LFLG…VAGL), 404 to 424 (VSKI…VLFE), 428 to 448 (IAFM…PIIL), 464 to 484 (GGWL…TIWV), and 493 to 513 (IFPY…GIWF).

This sequence belongs to the sodium:solute symporter (SSF) (TC 2.A.21) family.

The protein localises to the cell inner membrane. Its function is as follows. Transports acetate. This chain is Cation/acetate symporter ActP, found in Salmonella gallinarum (strain 287/91 / NCTC 13346).